Here is a 510-residue protein sequence, read N- to C-terminus: D-alanine--D-alanyl carrier protein ligase (510 aa).

157-158 (TS) contributes to the ATP binding site. D-alanine is bound at residue aspartate 202. 297–302 (NTYGPT) lines the ATP pocket. Valine 306 provides a ligand contact to D-alanine. ATP-binding residues include aspartate 389 and lysine 498. Residue lysine 498 participates in D-alanine binding.

It belongs to the ATP-dependent AMP-binding enzyme family. DltA subfamily.

Its subcellular location is the cytoplasm. The catalysed reaction is holo-[D-alanyl-carrier protein] + D-alanine + ATP = D-alanyl-[D-alanyl-carrier protein] + AMP + diphosphate. It functions in the pathway cell wall biogenesis; lipoteichoic acid biosynthesis. Catalyzes the first step in the D-alanylation of lipoteichoic acid (LTA), the activation of D-alanine and its transfer onto the D-alanyl carrier protein (Dcp) DltC. In an ATP-dependent two-step reaction, forms a high energy D-alanyl-AMP intermediate, followed by transfer of the D-alanyl residue as a thiol ester to the phosphopantheinyl prosthetic group of the Dcp. D-alanylation of LTA plays an important role in modulating the properties of the cell wall in Gram-positive bacteria, influencing the net charge of the cell wall. This is D-alanine--D-alanyl carrier protein ligase from Listeria innocua serovar 6a (strain ATCC BAA-680 / CLIP 11262).